The sequence spans 476 residues: Cytoplasmic 60S subunit biogenesis factor ZNF622 (476 aa).

Alanine 2 is subject to N-acetylalanine. 2 consecutive U1-type zinc fingers follow at residues 4 to 28 and 69 to 93; these read LTCI…TDWH and TYCT…SRRH. Residues 137-243 form a disordered region; it reads AIKAQPSTSP…AEDAAAEESP (107 aa). Over residues 167 to 177 the composition is skewed to basic and acidic residues; sequence VPERDPTEKPP. Positions 195-239 are enriched in acidic residues; it reads EDGEEEGEEEEEDDEDEDWEDIDSDDGLECEDPGVEDQDAEDAAA. Serine 275 carries the phosphoserine modification.

The protein belongs to the REI1 family. As to quaternary structure, homo- and heterodimer. Associates with pre-60S ribosomal particles. Interacts with MELK and MYBL2. Interacts with DNAJC21. In terms of processing, phosphorylated by MELK. The phosphorylation may redirect the protein to the nucleus. Ubiquitinated by HECTD1, leading to its degradation.

The protein localises to the cytoplasm. Its subcellular location is the nucleus. Its function is as follows. Pre-60S-associated cytoplasmic factor involved in the cytoplasmic maturation of the 60S subunit. In Mus musculus (Mouse), this protein is Cytoplasmic 60S subunit biogenesis factor ZNF622 (Znf622).